A 90-amino-acid polypeptide reads, in one-letter code: Cyclin-dependent kinases regulatory subunit 1 (90 aa).

This sequence belongs to the CKS family.

Functionally, binds to the catalytic subunit of the cyclin dependent kinases and is essential for their biological function. This is Cyclin-dependent kinases regulatory subunit 1 (CKS1) from Oryza sativa subsp. indica (Rice).